Here is a 100-residue protein sequence, read N- to C-terminus: Urease subunit gamma (100 aa).

It belongs to the urease gamma subunit family. In terms of assembly, heterotrimer of UreA (gamma), UreB (beta) and UreC (alpha) subunits. Three heterotrimers associate to form the active enzyme.

Its subcellular location is the cytoplasm. The catalysed reaction is urea + 2 H2O + H(+) = hydrogencarbonate + 2 NH4(+). It functions in the pathway nitrogen metabolism; urea degradation; CO(2) and NH(3) from urea (urease route): step 1/1. The sequence is that of Urease subunit gamma from Rhizobium leguminosarum bv. viciae.